The primary structure comprises 494 residues: Nuclear distribution protein PAC1 (494 aa).

The LisH domain maps to 14–46 (QKNELDKSVLRYLNWNYKQTVRHEHAQDYESVR). A coiled-coil region spans residues 90–123 (NSIVRLQKKIIELEQNTETLVSQIKDLNTQVSEL). WD repeat units follow at residues 153–192 (NVES…IPLA), 196–244 (SHTK…CKFQ), 251–292 (GHEH…SLKT), 295–334 (PHSQ…SVGT), 347–395 (HFIE…LMAH), 415–454 (GHLS…HVWE), and 457–492 (HTGF…SNVF).

The protein belongs to the WD repeat LIS1/nudF family. Self-associates. Interacts with NDL1 and dynein.

It localises to the cytoplasm. The protein resides in the cytoskeleton. The protein localises to the spindle pole. Positively regulates the activity of the minus-end directed microtubule motor protein dynein. Plays a central role in positioning the mitotic spindle at the bud neck during cell division. Targets cytoplasmic dynein to microtubule plus ends, thereby promoting dynein-mediated microtubule sliding along the bud cortex and consequently the movement of the mitotic spindle to the bud neck. The sequence is that of Nuclear distribution protein PAC1 from Saccharomyces cerevisiae (strain Lalvin EC1118 / Prise de mousse) (Baker's yeast).